The following is a 557-amino-acid chain: Acid-sensing ion channel 1B (557 aa).

Residues 1–98 (MVRITCTISF…SIRQGLWALV (98 aa)) lie on the Cytoplasmic side of the membrane. Basic and acidic residues predominate over residues 36-45 (KDGEQGKYQE). Residues 36-57 (KDGEQGKYQEEGDDPDAYDGPE) are disordered. Positions 46 to 57 (EGDDPDAYDGPE) are enriched in acidic residues. Residues 99–115 (FLLAISMFLLQVVDRVI) traverse the membrane as a helical segment. The Extracellular portion of the chain corresponds to 116-460 (YYLQYDYVTL…ETIEQKKAYE (345 aa)). N133 and N194 each carry an N-linked (GlcNAc...) asparagine glycan. 7 disulfides stabilise this stretch: C142–C229, C207–C214, C325–C400, C343–C396, C347–C394, C356–C378, and C358–C370. Residues N401 and N428 are each glycosylated (N-linked (GlcNAc...) asparagine). A discontinuously helical transmembrane segment spans residues 461-491 (LAGLLGDIGGQMGLFIGASILTILELFDYLY). The short motif at 477 to 479 (GAS) is the GAS motif; ion selectivity filter element. Topologically, residues 492-557 (EVIKFKLCRC…GQGNFEDFTC (66 aa)) are cytoplasmic.

This sequence belongs to the amiloride-sensitive sodium channel (TC 1.A.6) family. ASIC1 subfamily. As to quaternary structure, homotrimer. Heterotrimer; with other ASIC proteins producing channel with different properties. As to expression, expressed in central nervous system.

It is found in the cell membrane. It localises to the postsynaptic cell membrane. The protein localises to the cell projection. Its subcellular location is the dendrite. It catalyses the reaction Na(+)(in) = Na(+)(out). The catalysed reaction is K(+)(in) = K(+)(out). The enzyme catalyses Li(+)(in) = Li(+)(out). It carries out the reaction Ca(2+)(in) = Ca(2+)(out). Inhibited by the diuretic drug amiloride. Its function is as follows. Forms voltage-independent, pH-gated trimeric sodium channels that act as postsynaptic excitatory receptors in the nervous system, playing a crucial role in regulating synaptic plasticity, learning, and memory. Upon extracellular pH drop this channel elicits transient, fast activating, and completely desensitizing inward currents. Displays high selectivity for sodium ions but can also permit the permeation of other cations. This chain is Acid-sensing ion channel 1B (asic1b), found in Danio rerio (Zebrafish).